The primary structure comprises 438 residues: V-type ATP synthase beta chain (438 aa).

It belongs to the ATPase alpha/beta chains family.

In terms of biological role, produces ATP from ADP in the presence of a proton gradient across the membrane. The V-type beta chain is a regulatory subunit. This chain is V-type ATP synthase beta chain, found in Chlamydia trachomatis serovar A (strain ATCC VR-571B / DSM 19440 / HAR-13).